Reading from the N-terminus, the 1330-residue chain is Paired amphipathic helix protein Sin3-like 3 (1330 aa).

PAH domains lie at 8–78 (QKLT…LPKG) and 94–164 (KRVE…LPDT). Residues 191–246 (IITPHPDHDYGTEHIDQDRERPIKKENKEHMRGTNKENEHRDARDFEPHSKKEQFL) are compositionally biased toward basic and acidic residues. Residues 191–281 (IITPHPDHDY…VPSSSTYDEK (91 aa)) form a disordered region. The segment covering 262-277 (ISNQSKLSGAVPSSST) has biased composition (polar residues). The PAH 3 domain maps to 283 to 351 (AMKSYSQDLA…DSFIEFLVQC (69 aa)). 5 disordered regions span residues 373 to 401 (GEGKYPQPSLDNDRDQEHKRDDGLRDRDH), 718 to 775 (NQNV…GRTS), 789 to 808 (KNVVTSDEKPESKQAVSIER), 882 to 906 (QEMAGTSKVEREEGELSPNGDFEED), and 920 to 1002 (SKAN…EAEC). Basic and acidic residues predominate over residues 383 to 401 (DNDRDQEHKRDDGLRDRDH). The span at 723–734 (SGSSSAGESEGS) shows a compositional bias: low complexity. Over residues 789–800 (KNVVTSDEKPES) the composition is skewed to basic and acidic residues. The segment covering 920 to 932 (SKANDSTGNNISG) has biased composition (polar residues). Basic and acidic residues-rich tracts occupy residues 933–949 (DRSREGEPSCLETRAEN) and 956–968 (NAARSSEDSRNEY). Acidic residues predominate over residues 980 to 989 (GGEDPEDDLD). At serine 996 the chain carries Phosphoserine.

Interacts with ERF7 and the histone deacetylase HDA19.

It localises to the nucleus. In terms of biological role, acts as a transcriptional repressor. Interacts with ERF7 to repress genes in abscisic acid and drought stress responses. The heterodimer represses transcription by tethering SNL3 to DNA. This is Paired amphipathic helix protein Sin3-like 3 (SNL3) from Arabidopsis thaliana (Mouse-ear cress).